We begin with the raw amino-acid sequence, 776 residues long: Protein SEY1 (776 aa).

Topologically, residues 1-681 (MADRPAIQLI…KRSIITTRTH (681 aa)) are cytoplasmic. Residues 34 to 263 (GLDYHVISVF…TENYYFKPQY (230 aa)) enclose the GB1/RHD3-type G domain. 44–51 (GSQSSGKS) serves as a coordination point for GTP. Residues 682 to 702 (IPPWIYVLLAVLGWNEFVAVI) traverse the membrane as a helical segment. At 703–705 (RNP) the chain is on the lumenal side. The chain crosses the membrane as a helical span at residues 706–726 (LFVTLTLILGATFFVIHKFGL). The Cytoplasmic segment spans residues 727-776 (WGPVVNVVQSAVGETRTAIKDKLRQFVVEDHEVKESFEMKDFSKNEQKEK).

This sequence belongs to the TRAFAC class dynamin-like GTPase superfamily. GB1/RHD3 GTPase family. RHD3 subfamily. Interacts with RTN1 and YOP1; GTP binding is not required for these interactions.

Its subcellular location is the endoplasmic reticulum membrane. Its function is as follows. Cooperates with the reticulon proteins RTN1 and RTN2 and the tubule-shaping DP1 family protein YOP1 to generate and maintain the structure of the tubular endoplasmic reticulum network. Has GTPase activity, which is required for its function in ER organization. The polypeptide is Protein SEY1 (Saccharomyces cerevisiae (strain ATCC 204508 / S288c) (Baker's yeast)).